A 488-amino-acid polypeptide reads, in one-letter code: Transmembrane protein 39A (488 aa).

2 N-linked (GlcNAc...) asparagine glycosylation sites follow: Asn31 and Asn39. Helical transmembrane passes span 72–92, 110–130, and 155–175; these read GLLF…IQYI, TSLN…VMLA, and LITA…WTLV. Asn180 carries N-linked (GlcNAc...) asparagine glycosylation. 5 consecutive transmembrane segments (helical) span residues 182-202, 287-307, 319-339, 420-440, and 446-466; these read SVLN…LCCF, EVLF…LCFV, CEHL…QLLP, LLNL…YSLL, and NHTL…FKLL.

It belongs to the TMEM39 family.

Its subcellular location is the endoplasmic reticulum membrane. Regulates autophagy by controlling the spatial distribution and levels of the intracellular phosphatidylinositol 4-phosphate (PtdIns(4)P) pools. Modulates (PtdIns(4)P) levels by regulating the ER-to-Golgi trafficking of the phosphatidylinositide phosphatase SACM1L. The protein is Transmembrane protein 39A (tmem39a) of Xenopus tropicalis (Western clawed frog).